The chain runs to 259 residues: GTP cyclohydrolase FolE2 (259 aa).

It belongs to the GTP cyclohydrolase IV family.

It carries out the reaction GTP + H2O = 7,8-dihydroneopterin 3'-triphosphate + formate + H(+). It functions in the pathway cofactor biosynthesis; 7,8-dihydroneopterin triphosphate biosynthesis; 7,8-dihydroneopterin triphosphate from GTP: step 1/1. Functionally, converts GTP to 7,8-dihydroneopterin triphosphate. The sequence is that of GTP cyclohydrolase FolE2 from Thermotoga petrophila (strain ATCC BAA-488 / DSM 13995 / JCM 10881 / RKU-1).